The following is a 260-amino-acid chain: UPF0246 protein BceJ2315_22780 (260 aa).

It belongs to the UPF0246 family.

The chain is UPF0246 protein BceJ2315_22780 from Burkholderia cenocepacia (strain ATCC BAA-245 / DSM 16553 / LMG 16656 / NCTC 13227 / J2315 / CF5610) (Burkholderia cepacia (strain J2315)).